The chain runs to 380 residues: Phospho-N-acetylmuramoyl-pentapeptide-transferase (380 aa).

11 helical membrane passes run 26 to 46 (IVAA…LFIE), 75 to 95 (MGGA…ADLG), 98 to 118 (LVWA…WDDW), 135 to 155 (LVLQ…DWQP), 160 to 180 (GFPF…PFVP), 183 to 203 (LFSP…VVAT), 222 to 242 (IVSS…IAGF), 259 to 279 (LGVF…YNTY), 283 to 303 (VFMG…LAVL), 311 to 331 (AILH…VWSF), and 357 to 377 (KIIV…LMSL).

It belongs to the glycosyltransferase 4 family. MraY subfamily. Mg(2+) is required as a cofactor.

The protein localises to the cell inner membrane. It catalyses the reaction UDP-N-acetyl-alpha-D-muramoyl-L-alanyl-gamma-D-glutamyl-meso-2,6-diaminopimeloyl-D-alanyl-D-alanine + di-trans,octa-cis-undecaprenyl phosphate = di-trans,octa-cis-undecaprenyl diphospho-N-acetyl-alpha-D-muramoyl-L-alanyl-D-glutamyl-meso-2,6-diaminopimeloyl-D-alanyl-D-alanine + UMP. Its pathway is cell wall biogenesis; peptidoglycan biosynthesis. In terms of biological role, catalyzes the initial step of the lipid cycle reactions in the biosynthesis of the cell wall peptidoglycan: transfers peptidoglycan precursor phospho-MurNAc-pentapeptide from UDP-MurNAc-pentapeptide onto the lipid carrier undecaprenyl phosphate, yielding undecaprenyl-pyrophosphoryl-MurNAc-pentapeptide, known as lipid I. The chain is Phospho-N-acetylmuramoyl-pentapeptide-transferase from Anaeromyxobacter sp. (strain Fw109-5).